The sequence spans 206 residues: LOB domain-containing protein 35 (206 aa).

The 102-residue stretch at 4-105 (TCCSACKVMK…EQINSAKNEL (102 aa)) folds into the LOB domain. Residues 184–206 (ASTSGGTSATQKTLPFPQNHNQP) are disordered.

The protein belongs to the LOB domain-containing protein family.

This is LOB domain-containing protein 35 (LBD35) from Arabidopsis thaliana (Mouse-ear cress).